The primary structure comprises 297 residues: Coiled-coil domain-containing protein 159 (297 aa).

The stretch at 147–297 (EELELVREEV…SKSGRSFPPA (151 aa)) forms a coiled coil. Positions 256-297 (LRGHKGHQCLSPPLPSWDSDSDCDQDLSQPPFSKSGRSFPPA) are disordered.

Interacts with DYNLT2. Interacts with GGNBP1. Interacts with OSBP2.

Its function is as follows. Functions during spermatid development; may participate in the centrosome reduction procedure of spermatids and is required for the formation of the connecting piece/sperm head-tail coupling apparatus (HTCA) and the correct and tight attachment of the flagellum to the nuclear envelope. In Homo sapiens (Human), this protein is Coiled-coil domain-containing protein 159 (CCDC159).